We begin with the raw amino-acid sequence, 207 residues long: LexA repressor (207 aa).

A DNA-binding region (H-T-H motif) is located at residues 28–48 (RAEIARELGFRSANAAEEHLK). Residues Ser-124 and Lys-161 each act as for autocatalytic cleavage activity in the active site.

It belongs to the peptidase S24 family. As to quaternary structure, homodimer.

The enzyme catalyses Hydrolysis of Ala-|-Gly bond in repressor LexA.. Functionally, represses a number of genes involved in the response to DNA damage (SOS response), including recA and lexA. In the presence of single-stranded DNA, RecA interacts with LexA causing an autocatalytic cleavage which disrupts the DNA-binding part of LexA, leading to derepression of the SOS regulon and eventually DNA repair. In Aliivibrio salmonicida (strain LFI1238) (Vibrio salmonicida (strain LFI1238)), this protein is LexA repressor.